The primary structure comprises 385 residues: Cytochrome b (385 aa).

4 helical membrane-spanning segments follow: residues 32-52, 76-98, 113-133, and 179-199; these read FGSL…TLAM, WLVR…LHIG, TWAI…LGYV, and FFAL…MHLI. 2 residues coordinate heme b: His82 and His96. His183 and His197 together coordinate heme b. His202 contributes to the a ubiquinone binding site. The next 4 membrane-spanning stretches (helical) occupy residues 226–246, 290–310, 322–342, and 349–369; these read FVFK…IFVF, LLGV…PITD, LSKV…QIGA, and FIEF…VIVP.

Belongs to the cytochrome b family. Fungal cytochrome b-c1 complex contains 10 subunits; 3 respiratory subunits, 2 core proteins and 5 low-molecular weight proteins. Cytochrome b-c1 complex is a homodimer. Heme b serves as cofactor.

It localises to the mitochondrion inner membrane. Component of the ubiquinol-cytochrome c reductase complex (complex III or cytochrome b-c1 complex) that is part of the mitochondrial respiratory chain. The b-c1 complex mediates electron transfer from ubiquinol to cytochrome c. Contributes to the generation of a proton gradient across the mitochondrial membrane that is then used for ATP synthesis. The polypeptide is Cytochrome b (cob) (Aspergillus terreus (strain NIH 2624 / FGSC A1156)).